Reading from the N-terminus, the 234-residue chain is Rhodanese-like domain-containing protein 9, chloroplastic (234 aa).

Residues 1–47 constitute a chloroplast transit peptide; it reads MAGIISPSPTALYFTSNVGGRRLKAVSWAGKSVSGNVIRRRSLRIAA. The region spanning 62-185 is the Rhodanese domain; sequence AEEGYSVVDV…VKPGTFESVG (124 aa). The active-site Cysteine persulfide intermediate is C145. Residues 204 to 222 form a helical membrane-spanning segment; the sequence is ISAVLGTVLVCAYLFIQFF.

It is found in the plastid. It localises to the chloroplast. The protein resides in the membrane. This chain is Rhodanese-like domain-containing protein 9, chloroplastic (STR9), found in Arabidopsis thaliana (Mouse-ear cress).